The chain runs to 310 residues: Thiamine-monophosphate kinase (310 aa).

Mg(2+) is bound by residues Asp26, Thr40, Ser41, and Asp42. Asp49 serves as a coordination point for substrate. Asp70 and Asp118 together coordinate Mg(2+). ATP-binding positions include 117-118 (GD) and Arg141. Asp202 contacts Mg(2+). Ser204 is a binding site for ATP. Asp205 lines the Mg(2+) pocket. Substrate is bound by residues Glu251 and Trp299.

This sequence belongs to the thiamine-monophosphate kinase family.

The catalysed reaction is thiamine phosphate + ATP = thiamine diphosphate + ADP. It participates in cofactor biosynthesis; thiamine diphosphate biosynthesis; thiamine diphosphate from thiamine phosphate: step 1/1. Functionally, catalyzes the ATP-dependent phosphorylation of thiamine-monophosphate (TMP) to form thiamine-pyrophosphate (TPP), the active form of vitamin B1. In Pyrococcus abyssi (strain GE5 / Orsay), this protein is Thiamine-monophosphate kinase.